The chain runs to 283 residues: Cuticle collagen 49 (283 aa).

An N-terminal signal peptide occupies residues Met-1–Cys-19. Positions Glu-90–Ala-283 are disordered. Over residues Val-127–Ile-139 the composition is skewed to basic and acidic residues. Positions Ala-143–Leu-155 are enriched in pro residues. The segment covering Gln-185 to Gly-204 has biased composition (low complexity). The Collagen-like domain maps to Gly-213–Glu-271. Positions Arg-244–Asp-257 are enriched in basic and acidic residues.

This sequence belongs to the cuticular collagen family. Collagen polypeptide chains are complexed within the cuticle by disulfide bonds and other types of covalent cross-links.

Functionally, probable cuticular collagen-like protein. Nematode cuticles are composed largely of collagen-like proteins. The cuticle functions both as an exoskeleton and as a barrier to protect the worm from its environment. Acts downstream of the Wnt signaling pathway, perhaps in the formation of the adult cuticle. The sequence is that of Cuticle collagen 49 from Caenorhabditis elegans.